Here is a 251-residue protein sequence, read N- to C-terminus: CDP-diacylglycerol pyrophosphatase (251 aa).

The chain crosses the membrane as a helical span at residues 4-24; sequence AGLLFLVMIVIAVVAAGIGYW.

It belongs to the Cdh family.

It localises to the cell inner membrane. The enzyme catalyses a CDP-1,2-diacyl-sn-glycerol + H2O = a 1,2-diacyl-sn-glycero-3-phosphate + CMP + 2 H(+). It functions in the pathway phospholipid metabolism; CDP-diacylglycerol degradation; phosphatidate from CDP-diacylglycerol: step 1/1. This is CDP-diacylglycerol pyrophosphatase from Shigella flexneri.